The following is a 97-amino-acid chain: Large ribosomal subunit protein bL28 (97 aa).

The protein belongs to the bacterial ribosomal protein bL28 family.

This chain is Large ribosomal subunit protein bL28, found in Rickettsia prowazekii (strain Madrid E).